A 259-amino-acid polypeptide reads, in one-letter code: MSKYKLIMLRHGEGAWNKENRFCSWVDQKLNSEGMEEARNCGKQLKALNFEFDLVFTSVLNRSIHTAWLILEELGQEWVPVESSWRLNERHYGALIGLNREQMALNHGEEQVRLWRRSYNITPPPIEESHPYYHEIYNDRRYKVCDVPLDQLPRSESLKDVLERLLPYWNERIAPEVLRGKTVLISAHGNSSRALLKHLEGISDEDIINITLPTGVPILLELDENLRAVGPHQFLGDQEAIQAAIKKVEDQGKVKQAKK.

Residue serine 2 is modified to N-acetylserine. Substrate contacts are provided by residues 10–17 (RHGEGAWN), 23–24 (CS), arginine 62, 89–92 (ERHY), arginine 100, and 116–117 (RR). Histidine 11 functions as the Tele-phosphohistidine intermediate in the catalytic mechanism. Catalysis depends on glutamate 89, which acts as the Proton donor/acceptor. Phosphothreonine is present on threonine 122. Position 189-190 (189-190 (GN)) interacts with substrate.

It belongs to the phosphoglycerate mutase family. BPG-dependent PGAM subfamily. Homodimer.

The enzyme catalyses (2R)-3-phospho-glyceroyl phosphate = (2R)-2,3-bisphosphoglycerate + H(+). It catalyses the reaction (2R)-2-phosphoglycerate = (2R)-3-phosphoglycerate. With respect to regulation, at alkaline pH BPGM favors the synthase reaction; however, at lower pH the phosphatase reaction is dominant. Inhibited by citrate. Plays a major role in regulating hemoglobin oxygen affinity by controlling the levels of its allosteric effector 2,3-bisphosphoglycerate (2,3-BPG). Also exhibits mutase (EC 5.4.2.11) activity. The chain is Bisphosphoglycerate mutase (BPGM) from Macaca fascicularis (Crab-eating macaque).